A 352-amino-acid polypeptide reads, in one-letter code: MTKRKLTQNQKRRIHSNNVKALDRHHRRAKKEIDWQEEMLGDTQDGVVVTRYSMHADVENSQGEIFRCNLRRTLANVVVGDHVVWRRGHEKLQGISGVIEAIKPRENEIARPDYYDGLKVMASNIDRIIIVSSVLPALSLNIIDRYLVICENANIPAVILLNKVDLLTDEQWREAEEQLEIYRKIGYETLMISAISGKNMEKLTALLADGTSIFVGQSGVGKSSLINYILPEVNAQTGEISETSGLGQHTTTSSRLYHLPQGGNLIDSPGIREFGLWHLEPAQITNGYREFQYFLGTCKFRDCKHIDDPGCALREAVELGKIHPVRFDNYHRLISSREENKSQRHFMEQDIR.

The span at 1-15 shows a compositional bias: basic residues; the sequence is MTKRKLTQNQKRRIH. Residues 1-26 form a disordered region; sequence MTKRKLTQNQKRRIHSNNVKALDRHH. In terms of domain architecture, CP-type G spans 106–274; that stretch reads ENEIARPDYY…LIDSPGIREF (169 aa). GTP is bound by residues 162-165 and 216-224; these read NKVD and GQSGVGKSS. Zn(2+)-binding residues include Cys-298, Cys-303, His-305, and Cys-311.

It belongs to the TRAFAC class YlqF/YawG GTPase family. RsgA subfamily. Monomer. Associates with 30S ribosomal subunit, binds 16S rRNA. Zn(2+) is required as a cofactor.

Its subcellular location is the cytoplasm. In terms of biological role, one of several proteins that assist in the late maturation steps of the functional core of the 30S ribosomal subunit. Helps release RbfA from mature subunits. May play a role in the assembly of ribosomal proteins into the subunit. Circularly permuted GTPase that catalyzes slow GTP hydrolysis, GTPase activity is stimulated by the 30S ribosomal subunit. The protein is Small ribosomal subunit biogenesis GTPase RsgA of Mannheimia succiniciproducens (strain KCTC 0769BP / MBEL55E).